The sequence spans 287 residues: 2-dehydro-3-deoxyphosphooctonate aldolase (287 aa).

Belongs to the KdsA family.

Its subcellular location is the cytoplasm. The enzyme catalyses D-arabinose 5-phosphate + phosphoenolpyruvate + H2O = 3-deoxy-alpha-D-manno-2-octulosonate-8-phosphate + phosphate. The protein operates within carbohydrate biosynthesis; 3-deoxy-D-manno-octulosonate biosynthesis; 3-deoxy-D-manno-octulosonate from D-ribulose 5-phosphate: step 2/3. It participates in bacterial outer membrane biogenesis; lipopolysaccharide biosynthesis. In Caulobacter vibrioides (strain ATCC 19089 / CIP 103742 / CB 15) (Caulobacter crescentus), this protein is 2-dehydro-3-deoxyphosphooctonate aldolase.